The sequence spans 475 residues: Ribulose bisphosphate carboxylase large chain (475 aa).

The propeptide occupies 1–2; the sequence is MS. Pro3 is modified (N-acetylproline). Lys14 is subject to N6,N6,N6-trimethyllysine. Residues Asn123 and Thr173 each coordinate substrate. Catalysis depends on Lys175, which acts as the Proton acceptor. Lys177 lines the substrate pocket. Positions 201, 203, and 204 each coordinate Mg(2+). At Lys201 the chain carries N6-carboxylysine. His294 (proton acceptor) is an active-site residue. Substrate-binding residues include Arg295, His327, and Ser379.

It belongs to the RuBisCO large chain family. Type I subfamily. As to quaternary structure, heterohexadecamer of 8 large chains and 8 small chains; disulfide-linked. The disulfide link is formed within the large subunit homodimers. It depends on Mg(2+) as a cofactor. Post-translationally, the disulfide bond which can form in the large chain dimeric partners within the hexadecamer appears to be associated with oxidative stress and protein turnover.

It is found in the plastid. The protein resides in the chloroplast. It catalyses the reaction 2 (2R)-3-phosphoglycerate + 2 H(+) = D-ribulose 1,5-bisphosphate + CO2 + H2O. The catalysed reaction is D-ribulose 1,5-bisphosphate + O2 = 2-phosphoglycolate + (2R)-3-phosphoglycerate + 2 H(+). In terms of biological role, ruBisCO catalyzes two reactions: the carboxylation of D-ribulose 1,5-bisphosphate, the primary event in carbon dioxide fixation, as well as the oxidative fragmentation of the pentose substrate in the photorespiration process. Both reactions occur simultaneously and in competition at the same active site. The polypeptide is Ribulose bisphosphate carboxylase large chain (Pelargonium hortorum (Common geranium)).